A 189-amino-acid chain; its full sequence is Elongation factor P (189 aa).

It belongs to the elongation factor P family.

It localises to the cytoplasm. The protein operates within protein biosynthesis; polypeptide chain elongation. Functionally, involved in peptide bond synthesis. Stimulates efficient translation and peptide-bond synthesis on native or reconstituted 70S ribosomes in vitro. Probably functions indirectly by altering the affinity of the ribosome for aminoacyl-tRNA, thus increasing their reactivity as acceptors for peptidyl transferase. The chain is Elongation factor P from Rhizobium radiobacter (Agrobacterium tumefaciens).